Reading from the N-terminus, the 142-residue chain is Photosystem II extrinsic protein U (142 aa).

A signal peptide spans 1–29 (MKGLVRLLTVFSLLLGCWGWLGTTQIAQA).

It belongs to the PsbU family. PSII is composed of 1 copy each of membrane proteins PsbA, PsbB, PsbC, PsbD, PsbE, PsbF, PsbH, PsbI, PsbJ, PsbK, PsbL, PsbM, PsbT, PsbX, PsbY, PsbZ, Psb30/Ycf12, peripheral proteins PsbO, CyanoQ (PsbQ), PsbU, PsbV and a large number of cofactors. It forms dimeric complexes.

It is found in the cellular thylakoid membrane. Functionally, one of the extrinsic, lumenal subunits of photosystem II (PSII). PSII is a light-driven water plastoquinone oxidoreductase, using light energy to abstract electrons from H(2)O, generating a proton gradient subsequently used for ATP formation. The extrinsic proteins stabilize the structure of photosystem II oxygen-evolving complex (OEC), the ion environment of oxygen evolution and protect the OEC against heat-induced inactivation. The polypeptide is Photosystem II extrinsic protein U (Trichormus variabilis (strain ATCC 29413 / PCC 7937) (Anabaena variabilis)).